A 522-amino-acid chain; its full sequence is 2-isopropylmalate synthase (522 aa).

The Pyruvate carboxyltransferase domain occupies 5–267 (VIIFDTTLRD…ETGINAKEIH (263 aa)). D14, H202, H204, and N238 together coordinate Mn(2+). Residues 392–522 (QLQQLVVQSD…MQKNRELGGV (131 aa)) form a regulatory domain region.

Belongs to the alpha-IPM synthase/homocitrate synthase family. LeuA type 1 subfamily. In terms of assembly, homodimer. The cofactor is Mn(2+).

Its subcellular location is the cytoplasm. The enzyme catalyses 3-methyl-2-oxobutanoate + acetyl-CoA + H2O = (2S)-2-isopropylmalate + CoA + H(+). The protein operates within amino-acid biosynthesis; L-leucine biosynthesis; L-leucine from 3-methyl-2-oxobutanoate: step 1/4. Catalyzes the condensation of the acetyl group of acetyl-CoA with 3-methyl-2-oxobutanoate (2-ketoisovalerate) to form 3-carboxy-3-hydroxy-4-methylpentanoate (2-isopropylmalate). This is 2-isopropylmalate synthase from Shewanella baltica (strain OS185).